An 874-amino-acid polypeptide reads, in one-letter code: MTENTEKGASVETPQVAGSQTNPPVQEPLALTKIPPIKVKSERPDAEVEAKLRAMNAKIKAEMVTLMRRSNSNELGNNDESGESESSASADDKKNIKPVKSSNEILAELFGVFNAAPPEELLDDNLFKKKKKVKKEKKDKKAKKKKTTKSDGECSDSEAEGKHKHKRKKHKHKDIRVKDKEKDRDRDKSKEKDRDRVTDKSKEKDRDRDRDRDKSKDKFTAAQAPSEKEKEKSESRKRSAVEPSSHSEKRERHEREKHRDWEREREREKEHERERVRSNNSFYNGQREADRLKGSESASTKSRQEQDLSDISLSDEESYLREKASNGRRRAHNSFYDEKEELSVSPKRNVRESNTRRNRKSRSRSRDLGIDKKRLLEIARRNAINMFKQGTMPGVANMTAEVKDKVLVKMRYGGRTIQDLTDFCKKISNGDGLSDLSSEEESDVDKNGNAKVFHHPFQLKEREPIVMHIRNSTALVPAPPRLDEQTKAITMQFPVSSGQTHRNNEVWVPVDPKDSLVPLPSLPPAKQATNMFKETPKNVFAKSIPLQEQQEPAFKPLGGAVVVPPLAATQLPTVPQSVPPTVPKEFAPPAVPFVPEVPIPSTSPVTPMQSASIFPDVTPPSMDVSSIITQRLSAIRRLQENPADSEALKMMYTAQRNMSSWANSKHLPGQFTGSTGAQVMKAHELNSGPQLWVRKDQMTSTKPVTGGMGMALLQKMGWKPGEGLGRCKTGSLQPLLLDVKLDKRGLVSRDDLRPPQMRAPAAQRRNKNMAGPIGAGPCPAVQGAGPGPLASTPLVTQDKHPVCVLNELTSKNKWMPPQYKLRQDIGPAHNRSFLFSVEINGQTFTPDRGSNNKKEAKLNAAALCLRSLGILPPS.

Disordered stretches follow at residues 1-45 (MTEN…ERPD), 68-98 (RRSN…NIKP), and 120-368 (ELLD…SRDL). A compositionally biased stretch (polar residues) spans 12-24 (ETPQVAGSQTNPP). The span at 70-89 (SNSNELGNNDESGESESSAS) shows a compositional bias: low complexity. Basic residues-rich tracts occupy residues 128 to 147 (KKKK…KKKT) and 162 to 175 (KHKH…HKDI). Basic and acidic residues-rich tracts occupy residues 176–219 (RVKD…KDKF) and 226–277 (SEKE…ERVR). The G-patch domain maps to 705-751 (TGGMGMALLQKMGWKPGEGLGRCKTGSLQPLLLDVKLDKRGLVSRDD). A DRBM domain is found at 800–870 (HPVCVLNELT…AALCLRSLGI (71 aa)).

As to expression, expressed in ovarian nurse cells (at protein level).

It localises to the nucleus. Its function is as follows. RNA-binding protein that protects nascent transcripts containing intronic transposable sequences, known as INE-1, from being degraded by DIP1. Modulates DIP1 activity by repressing its sumoylation levels. This ensures that intronic sequences will be degradated only after splicing. In the ovaries, regulates germline stem cells (GSCs) self-renewal by repressing the expression of the GSC differentiation-promoting factor Rga. The polypeptide is Protein Son (Drosophila melanogaster (Fruit fly)).